The chain runs to 353 residues: Phosphoribosylformylglycinamidine cyclo-ligase (353 aa).

Belongs to the AIR synthase family.

It localises to the cytoplasm. It catalyses the reaction 2-formamido-N(1)-(5-O-phospho-beta-D-ribosyl)acetamidine + ATP = 5-amino-1-(5-phospho-beta-D-ribosyl)imidazole + ADP + phosphate + H(+). It functions in the pathway purine metabolism; IMP biosynthesis via de novo pathway; 5-amino-1-(5-phospho-D-ribosyl)imidazole from N(2)-formyl-N(1)-(5-phospho-D-ribosyl)glycinamide: step 2/2. The polypeptide is Phosphoribosylformylglycinamidine cyclo-ligase (Magnetococcus marinus (strain ATCC BAA-1437 / JCM 17883 / MC-1)).